Consider the following 202-residue polypeptide: Guanylate kinase (202 aa).

Residues 18 to 200 enclose the Guanylate kinase-like domain; it reads LKPVVVFGPS…AYKQLEAICL (183 aa). 25-32 provides a ligand contact to ATP; that stretch reads GPSGVGKS.

This sequence belongs to the guanylate kinase family.

The catalysed reaction is GMP + ATP = GDP + ADP. In terms of biological role, essential for recycling GMP and indirectly, cGMP. The sequence is that of Guanylate kinase from Schizosaccharomyces pombe (strain 972 / ATCC 24843) (Fission yeast).